A 312-amino-acid chain; its full sequence is uncharacterized protein (312 aa).

Catalysis depends on charge relay system residues serine 200, aspartate 261, and histidine 292.

It belongs to the AB hydrolase superfamily. AB hydrolase 2 family.

This is an uncharacterized protein from Acanthamoeba polyphaga mimivirus (APMV).